A 60-amino-acid polypeptide reads, in one-letter code: Large ribosomal subunit protein uL30 (60 aa).

Belongs to the universal ribosomal protein uL30 family. Part of the 50S ribosomal subunit.

In Streptococcus gordonii (strain Challis / ATCC 35105 / BCRC 15272 / CH1 / DL1 / V288), this protein is Large ribosomal subunit protein uL30.